The following is a 249-amino-acid chain: Probable calcium-binding protein CML12 (249 aa).

A compositionally biased stretch (basic and acidic residues) spans 1–24 (MQSQRERPREDRVHEETRGADHAH). The interval 1-80 (MQSQRERPRE…RKGKAPATAE (80 aa)) is disordered. A compositionally biased stretch (low complexity) spans 30-56 (AAAAASATATETATRTMSLHAGGVVVV). A compositionally biased stretch (basic and acidic residues) spans 57–70 (DGKEKGKKEEGEGK). 4 EF-hand domains span residues 91 to 126 (EQLR…LGLR), 128 to 163 (AAGD…LILG), 171 to 206 (VDQA…MGHP), and 207 to 242 (ICYA…SALD). 18 residues coordinate Ca(2+): aspartate 104, aspartate 106, aspartate 108, serine 110, glutamate 115, aspartate 141, aspartate 143, asparagine 145, threonine 147, glutamate 152, aspartate 184, aspartate 186, asparagine 188, glutamate 195, aspartate 220, aspartate 222, aspartate 224, and glutamate 231.

In terms of biological role, potential calcium sensor. The chain is Probable calcium-binding protein CML12 (CML12) from Oryza sativa subsp. japonica (Rice).